The chain runs to 594 residues: DNA ligase (594 aa).

Glu280 is a binding site for ATP. The active-site N6-AMP-lysine intermediate is Lys282. Arg287, Arg316, Glu345, Phe385, Arg456, and Lys462 together coordinate ATP.

Belongs to the ATP-dependent DNA ligase family. The cofactor is Mg(2+).

It carries out the reaction ATP + (deoxyribonucleotide)n-3'-hydroxyl + 5'-phospho-(deoxyribonucleotide)m = (deoxyribonucleotide)n+m + AMP + diphosphate.. Its function is as follows. DNA ligase that seals nicks in double-stranded DNA during DNA replication, DNA recombination and DNA repair. This is DNA ligase from Halorubrum lacusprofundi (strain ATCC 49239 / DSM 5036 / JCM 8891 / ACAM 34).